The primary structure comprises 686 residues: AsmA family protein YhjG (686 aa).

The Cytoplasmic portion of the chain corresponds to 1–6; that stretch reads MSKAGK. A helical membrane pass occupies residues 7–27; the sequence is ITAAISGAFLLLIVVAIILIA. Over 28 to 686 the chain is Periplasmic; that stretch reads TFDWNRLKPT…CRTILSQMKK (659 aa). The interval 372 to 396 is disordered; sequence VDSGKGAEKSKRSEQKKGEKSVQPA. The segment covering 376 to 391 has biased composition (basic and acidic residues); it reads KGAEKSKRSEQKKGEK.

It belongs to the AsmA family.

Its subcellular location is the cell inner membrane. In Escherichia coli (strain K12), this protein is AsmA family protein YhjG (yhjG).